The chain runs to 224 residues: Dehydration-responsive element-binding protein 1G (224 aa).

Positions 1–16 (MDVSAALSSDYSSGTP) are enriched in polar residues. Residues 1–46 (MDVSAALSSDYSSGTPSPVAADADDGSSAYMTVSSAPPKRRAGRTK) are disordered. The AP2/ERF DNA-binding region spans 54-111 (VFKGVRRRNPGRWVCEVREPHGKQRIWLGTFETAEMAARAHDVAALALRGRAACLNFA). Disordered stretches follow at residues 139–161 (AFRP…SGAT) and 200–224 (PPMA…LWSY).

It belongs to the AP2/ERF transcription factor family. ERF subfamily.

It is found in the nucleus. In terms of biological role, transcriptional activator that binds specifically to the DNA sequence 5'-[AG]CCGAC-3'. Binding to the C-repeat/DRE element mediates high salinity- and dehydration-inducible transcription. This Oryza sativa subsp. japonica (Rice) protein is Dehydration-responsive element-binding protein 1G (DREB1G).